The chain runs to 112 residues: Gastrula zinc finger protein XlCGF9.1 (112 aa).

4 C2H2-type zinc fingers span residues 6–28 (FICSDCGKCFNDSSILIRHMKIH), 34–56 (FCCPQCGRKFRRRAHLIVHERTH), 62–84 (FTCPECGKSFARRSHLMDHRIIH), and 90–112 (YSCPECGKCFGLQGYLNKHFKIH).

It belongs to the krueppel C2H2-type zinc-finger protein family.

The protein resides in the nucleus. In terms of biological role, may be involved in transcriptional regulation. In Xenopus laevis (African clawed frog), this protein is Gastrula zinc finger protein XlCGF9.1.